The primary structure comprises 306 residues: Protein YIPF1 (306 aa).

The Cytoplasmic portion of the chain corresponds to 1 to 119; the sequence is MAAVDDLQFE…VRLYIRSNPD (119 aa). The interval 14 to 62 is disordered; it reads NAATSLTANPDATTVNIEDPGETPKHQPGSPRGSGREEDDELLGNDDSD. The span at 15–29 shows a compositional bias: polar residues; the sequence is AATSLTANPDATTVN. Positions 50-59 are enriched in acidic residues; that stretch reads EEDDELLGND. A helical transmembrane segment spans residues 120 to 140; sequence LYGPFWICATLVFAIAISGNL. Residues 141–162 lie on the Lumenal side of the membrane; sequence SNFLIHLGEKTYHYVPEFRKVS. Residues 163–183 traverse the membrane as a helical segment; that stretch reads IAATIIYAYAWLVPLALWGFL. Residues 184–200 lie on the Cytoplasmic side of the membrane; that stretch reads MWRNSKVMNIVSYSFLE. The helical transmembrane segment at 201–221 threads the bilayer; the sequence is IVCVYGYSLFIYIPTAILWII. Residues 222 to 227 lie on the Lumenal side of the membrane; the sequence is PQKAVR. A helical transmembrane segment spans residues 228 to 248; the sequence is WILVMIALGISGSLLAMTFWP. The Cytoplasmic portion of the chain corresponds to 249-256; the sequence is AVREDNRR. Residues 257 to 277 traverse the membrane as a helical segment; sequence VALATIVTIVLLHMLLSVGCL. At 278–306 the chain is on the lumenal side; that stretch reads AYFFDAPEMDHLPTTTATPNQTVAAAKSS. Residue N297 is glycosylated (N-linked (GlcNAc...) asparagine).

This sequence belongs to the YIP1 family. In terms of assembly, interacts with YIPF6; this interaction may stabilize YIPF1. May also form a ternary complex with YIPF2 and YIPF6.

Its subcellular location is the golgi apparatus. The protein resides in the cis-Golgi network membrane. The protein localises to the trans-Golgi network membrane. It is found in the late endosome membrane. In Homo sapiens (Human), this protein is Protein YIPF1 (YIPF1).